The following is a 389-amino-acid chain: Large ribosomal subunit protein uL3 (389 aa).

Belongs to the universal ribosomal protein uL3 family.

The protein resides in the cytoplasm. The protein is Large ribosomal subunit protein uL3 (RPL3) of Debaryomyces hansenii (strain ATCC 36239 / CBS 767 / BCRC 21394 / JCM 1990 / NBRC 0083 / IGC 2968) (Yeast).